The primary structure comprises 66 residues: Large ribosomal subunit protein bL31 (66 aa).

Zn(2+)-binding residues include C16, C18, C36, and C39.

This sequence belongs to the bacterial ribosomal protein bL31 family. Type A subfamily. Part of the 50S ribosomal subunit. The cofactor is Zn(2+).

Functionally, binds the 23S rRNA. The polypeptide is Large ribosomal subunit protein bL31 (Desulforamulus reducens (strain ATCC BAA-1160 / DSM 100696 / MI-1) (Desulfotomaculum reducens)).